Here is a 328-residue protein sequence, read N- to C-terminus: Phosphate acyltransferase (328 aa).

It belongs to the PlsX family. Homodimer. Probably interacts with PlsY.

The protein localises to the cytoplasm. The catalysed reaction is a fatty acyl-[ACP] + phosphate = an acyl phosphate + holo-[ACP]. The protein operates within lipid metabolism; phospholipid metabolism. Its function is as follows. Catalyzes the reversible formation of acyl-phosphate (acyl-PO(4)) from acyl-[acyl-carrier-protein] (acyl-ACP). This enzyme utilizes acyl-ACP as fatty acyl donor, but not acyl-CoA. In Campylobacter jejuni subsp. jejuni serotype O:23/36 (strain 81-176), this protein is Phosphate acyltransferase.